Consider the following 259-residue polypeptide: Acetylglutamate kinase (259 aa).

Substrate is bound by residues 45-46 (GG), arginine 67, and asparagine 159.

Belongs to the acetylglutamate kinase family. ArgB subfamily.

The protein localises to the cytoplasm. The catalysed reaction is N-acetyl-L-glutamate + ATP = N-acetyl-L-glutamyl 5-phosphate + ADP. It functions in the pathway amino-acid biosynthesis; L-arginine biosynthesis; N(2)-acetyl-L-ornithine from L-glutamate: step 2/4. Catalyzes the ATP-dependent phosphorylation of N-acetyl-L-glutamate. This Aeromonas hydrophila subsp. hydrophila (strain ATCC 7966 / DSM 30187 / BCRC 13018 / CCUG 14551 / JCM 1027 / KCTC 2358 / NCIMB 9240 / NCTC 8049) protein is Acetylglutamate kinase.